We begin with the raw amino-acid sequence, 376 residues long: Erythronate-4-phosphate dehydrogenase (376 aa).

2 residues coordinate substrate: serine 45 and threonine 67. Aspartate 147 contacts NAD(+). Residue arginine 209 is part of the active site. Aspartate 233 serves as a coordination point for NAD(+). Glutamate 238 is an active-site residue. Histidine 255 acts as the Proton donor in catalysis. Glycine 258 serves as a coordination point for NAD(+). Residue tyrosine 259 coordinates substrate.

It belongs to the D-isomer specific 2-hydroxyacid dehydrogenase family. PdxB subfamily. As to quaternary structure, homodimer.

Its subcellular location is the cytoplasm. It carries out the reaction 4-phospho-D-erythronate + NAD(+) = (R)-3-hydroxy-2-oxo-4-phosphooxybutanoate + NADH + H(+). It participates in cofactor biosynthesis; pyridoxine 5'-phosphate biosynthesis; pyridoxine 5'-phosphate from D-erythrose 4-phosphate: step 2/5. Functionally, catalyzes the oxidation of erythronate-4-phosphate to 3-hydroxy-2-oxo-4-phosphonooxybutanoate. This chain is Erythronate-4-phosphate dehydrogenase, found in Shewanella baltica (strain OS185).